The sequence spans 499 residues: Long chain base biosynthesis protein 2b (499 aa).

A helical transmembrane segment spans residues 5 to 25 (VPYVTAATTLFSFGLIFGFGH). K322 bears the N6-(pyridoxal phosphate)lysine mark.

It belongs to the class-II pyridoxal-phosphate-dependent aminotransferase family. Heterodimer with LCB1. Component of the serine palmitoyltransferase (SPT) complex, composed of LCB1 and LCB2. It depends on pyridoxal 5'-phosphate as a cofactor.

It localises to the endoplasmic reticulum membrane. The catalysed reaction is L-serine + hexadecanoyl-CoA + H(+) = 3-oxosphinganine + CO2 + CoA. It participates in lipid metabolism; sphingolipid metabolism. Functionally, serine palmitoyltransferase (SPT). The heterodimer formed with LCB1 constitutes the catalytic core. This is Long chain base biosynthesis protein 2b from Oryza sativa subsp. japonica (Rice).